The following is a 27-amino-acid chain: uncharacterized protein (27 aa).

It localises to the plastid. The protein resides in the chloroplast. This is an uncharacterized protein from Marchantia polymorpha (Common liverwort).